Here is a 278-residue protein sequence, read N- to C-terminus: Tryptophan synthase alpha chain (278 aa).

Catalysis depends on proton acceptor residues glutamate 50 and aspartate 61.

The protein belongs to the TrpA family. In terms of assembly, tetramer of two alpha and two beta chains.

It catalyses the reaction (1S,2R)-1-C-(indol-3-yl)glycerol 3-phosphate + L-serine = D-glyceraldehyde 3-phosphate + L-tryptophan + H2O. It participates in amino-acid biosynthesis; L-tryptophan biosynthesis; L-tryptophan from chorismate: step 5/5. In terms of biological role, the alpha subunit is responsible for the aldol cleavage of indoleglycerol phosphate to indole and glyceraldehyde 3-phosphate. The polypeptide is Tryptophan synthase alpha chain (Methylobacterium nodulans (strain LMG 21967 / CNCM I-2342 / ORS 2060)).